Here is a 331-residue protein sequence, read N- to C-terminus: RNA/RNP complex-1-interacting phosphatase (331 aa).

Positions 61–208 (FEKHLAPEEC…LRNGPIRKNW (148 aa)) constitute a Tyrosine-protein phosphatase domain. C152 serves as the catalytic Phosphocysteine intermediate. Position 153 to 158 (153 to 158 (THGVNR)) interacts with substrate. R158 functions as the Proton donor/acceptor in the catalytic mechanism.

This sequence belongs to the protein-tyrosine phosphatase family. Non-receptor class dual specificity subfamily. As to quaternary structure, monomer. May interact with SFRS7 and SFRS9/SRP30C.

The protein localises to the nucleus. It localises to the nucleus speckle. In terms of biological role, possesses RNA 5'-triphosphatase and diphosphatase activities, but displays a poor protein-tyrosine phosphatase activity. In addition, has phosphatase activity with ATP, ADP and O-methylfluorescein phosphate (in vitro). Binds to RNA. May participate in nuclear mRNA metabolism. The sequence is that of RNA/RNP complex-1-interacting phosphatase (DUSP11) from Bos taurus (Bovine).